Reading from the N-terminus, the 158-residue chain is Putative peptidoglycan-binding-like protein (158 aa).

Residues 1–24 (MRSPKVKFLTIFTFCIFITKMSFA) form the signal peptide.

The protein belongs to the IagB/IpgF/P19 family.

The protein localises to the periplasm. This Escherichia coli (strain K12) protein is Putative peptidoglycan-binding-like protein (pbl).